The sequence spans 634 residues: Ankyrin repeat protein OPG025 (634 aa).

ANK repeat units lie at residues 36 to 69 (DGETPLKAYVTKKNNNIKNDVVILLLSSVDYKNI), 70 to 100 (NDFDIFEYLCSDNIDIDLLKLLISKGIEINS), 103 to 134 (NGINIVEKYATTSNPNVDVFKLLLDKGIPTCS), 175 to 211 (MGKTVLYYYIITRSQDGYATSLDVINYLISHKKEMRY), 307 to 337 (IQDLLLEYVSYHTVYINVIKCMIDEGATLYR), and 412 to 441 (HGCSILYHCIKSHSVSLVEWLIDNGADINI).

It belongs to the orthopoxvirus OPG025 family. As to quaternary structure, interacts with components of host SCF complex CUL1 and SKP1 and components of the cullin deneddylation/COP9 signalosome complex subunits COPS7A and COPS7B.

In terms of biological role, plays a role in the inhibition of host immune repsonse by counteracting the action of interferons on early events in the viral replication cycle. The polypeptide is Ankyrin repeat protein OPG025 (OPG025) (Vaccinia virus (strain Copenhagen) (VACV)).